A 133-amino-acid chain; its full sequence is MIVGLGNDLIDIRRIERMLVRYGDRFVQRIFTDIEQNKSESLQKKSSSYAKRFAAKEACAKALGTGIACGVNWKDMGVINLPSGKPIMKLTNRAQMQLQKLLPLHHDAIIHLSMTDDFPWAQAFIIIEALPRG.

Mg(2+)-binding residues include aspartate 8 and glutamate 57.

The protein belongs to the P-Pant transferase superfamily. AcpS family. Requires Mg(2+) as cofactor.

The protein localises to the cytoplasm. The enzyme catalyses apo-[ACP] + CoA = holo-[ACP] + adenosine 3',5'-bisphosphate + H(+). In terms of biological role, transfers the 4'-phosphopantetheine moiety from coenzyme A to a Ser of acyl-carrier-protein. The chain is Holo-[acyl-carrier-protein] synthase from Bartonella quintana (strain Toulouse) (Rochalimaea quintana).